A 147-amino-acid polypeptide reads, in one-letter code: UPF0735 ACT domain-containing protein GK2605 (147 aa).

Residues 69–144 enclose the ACT domain; sequence TLFFHLEDRS…FVEKVEIVGS (76 aa).

This sequence belongs to the UPF0735 family.

The sequence is that of UPF0735 ACT domain-containing protein GK2605 from Geobacillus kaustophilus (strain HTA426).